The following is a 553-amino-acid chain: CDP-diacylglycerol--glycerol-3-phosphate 3-phosphatidyltransferase, mitochondrial (553 aa).

The N-terminal 25 residues, 1–25 (MAAPAAGPVFWRRLLGLLPGRPGLA), are a transit peptide targeting the mitochondrion. Serine 46 carries the post-translational modification Phosphoserine. 121–128 (ASLYLGTG) lines the ATP pocket. 2 consecutive PLD phosphodiesterase domains span residues 212 to 238 (TIGL…SDSY) and 457 to 490 (TGWT…GYRS). Active-site residues include histidine 217, lysine 219, and aspartate 224.

Belongs to the CDP-alcohol phosphatidyltransferase class-II family.

It localises to the mitochondrion. The enzyme catalyses a CDP-1,2-diacyl-sn-glycerol + sn-glycerol 3-phosphate = a 1,2-diacyl-sn-glycero-3-phospho-(1'-sn-glycero-3'-phosphate) + CMP + H(+). It participates in phospholipid metabolism; phosphatidylglycerol biosynthesis; phosphatidylglycerol from CDP-diacylglycerol: step 1/2. Its activity is regulated as follows. Activated by calcium and magnesium and inhibited by other bivalent cations. In terms of biological role, functions in the biosynthesis of the anionic phospholipids phosphatidylglycerol and cardiolipin. The chain is CDP-diacylglycerol--glycerol-3-phosphate 3-phosphatidyltransferase, mitochondrial (PGS1) from Cricetulus griseus (Chinese hamster).